The following is a 312-amino-acid chain: Cytochrome c biogenesis protein CcsA (312 aa).

8 helical membrane passes run 18-38 (LGILIFYFLLINLPISLLALF), 48-68 (FFTILINLFIALQLIFRWILS), 73-93 (ISNLYESLYFLVWGISLGQLL), 102-122 (IIPVIAIPIELLTIAFACFVL), 148-168 (VMLSYAALIIGSLLSASVLFI), 216-236 (SILVGFVLLTLGLITGAIWAN), 250-267 (TWAFISWLFYAAYLHMRI), and 279-299 (FATSGFFVVLICYLGVNFLGI).

This sequence belongs to the CcmF/CycK/Ccl1/NrfE/CcsA family. May interact with ccs1.

Its subcellular location is the cellular thylakoid membrane. Its function is as follows. Required during biogenesis of c-type cytochromes (cytochrome c6 and cytochrome f) at the step of heme attachment. This Prochlorococcus marinus (strain MIT 9515) protein is Cytochrome c biogenesis protein CcsA.